A 203-amino-acid chain; its full sequence is Holliday junction branch migration complex subunit RuvA (203 aa).

The tract at residues 1–63 is domain I; it reads MIGQLSGKVD…EEHIHLYGFL (63 aa). Residues 64-142 form a domain II region; it reads TLEEKIFFNL…KISSGSAIIK (79 aa). Residues 143–149 are flexible linker; that stretch reads ESLNIKN. The domain III stretch occupies residues 150-203; sequence ITPVASNEVIKALVNLGFSRFEAQNAVQGIITQNPEISIDELIKTALKNRNSNF.

Belongs to the RuvA family. Homotetramer. Forms an RuvA(8)-RuvB(12)-Holliday junction (HJ) complex. HJ DNA is sandwiched between 2 RuvA tetramers; dsDNA enters through RuvA and exits via RuvB. An RuvB hexamer assembles on each DNA strand where it exits the tetramer. Each RuvB hexamer is contacted by two RuvA subunits (via domain III) on 2 adjacent RuvB subunits; this complex drives branch migration. In the full resolvosome a probable DNA-RuvA(4)-RuvB(12)-RuvC(2) complex forms which resolves the HJ.

It is found in the cytoplasm. In terms of biological role, the RuvA-RuvB-RuvC complex processes Holliday junction (HJ) DNA during genetic recombination and DNA repair, while the RuvA-RuvB complex plays an important role in the rescue of blocked DNA replication forks via replication fork reversal (RFR). RuvA specifically binds to HJ cruciform DNA, conferring on it an open structure. The RuvB hexamer acts as an ATP-dependent pump, pulling dsDNA into and through the RuvAB complex. HJ branch migration allows RuvC to scan DNA until it finds its consensus sequence, where it cleaves and resolves the cruciform DNA. The polypeptide is Holliday junction branch migration complex subunit RuvA (Rickettsia conorii (strain ATCC VR-613 / Malish 7)).